The chain runs to 641 residues: Epsin-2 (641 aa).

Residues R8, K11, R25, N30, R63, and H73 each contribute to the a 1,2-diacyl-sn-glycero-3-phospho-(1D-myo-inositol-4,5-bisphosphate) site. In terms of domain architecture, ENTH spans 12-144; it reads NIVNNYSEAE…KDEERLKAER (133 aa). A phosphoserine mark is found at R153 and Q156. The span at 163–181 shows a compositional bias: polar residues; the sequence is SNQITFGRGSSQPNLSTSH. Disordered stretches follow at residues 163–214 and 255–275; these read SNQI…GAPL and RATSPRVSSELEQARPQTSGE. R170 is subject to Omega-N-methylarginine. Residues S173, S192, and S195 each carry the phosphoserine modification. Polar residues predominate over residues 259–273; sequence PRVSSELEQARPQTS. UIM domains follow at residues 275–294 and 300–319; these read EEELQLQLALAMSREVAEQE and GDDLRLQMALEESRRDTVKI. Residues 340–425 form a disordered region; the sequence is ALPSSGPAAQ…QPASSAGKRA (86 aa). 6 repeat units span residues 352-354, 364-366, 377-379, 391-393, 409-411, and 427-429. The interval 352 to 639 is 6 X 3 AA repeats of [DE]-P-W; sequence EPWGPSASTN…AQATGTTNPF (288 aa). Over residues 408–421 the composition is skewed to low complexity; sequence SDPWAASQQPASSA. Residues 470–512 form a disordered region; sequence TAESVTSLPSQNNGTTSPDPFESQPLTVASSKPSSARKTPESF. Polar residues predominate over residues 472 to 506; it reads ESVTSLPSQNNGTTSPDPFESQPLTVASSKPSSAR. Phosphoserine is present on S486. T508 carries the phosphothreonine modification. Tandem repeats lie at residues 537-539 and 552-554. The segment at 537–639 is 3 X 3 AA repeats of N-P-F; that stretch reads NPFLAPGAPA…AQATGTTNPF (103 aa). A Phosphoserine modification is found at S570. Repeat unit 3 spans residues 637-639; that stretch reads NPF.

The protein belongs to the epsin family. As to quaternary structure, binds EPS15. Interacts with ITSN1. Binds AP-2 and clathrin. Interacts with UBQLN2. Post-translationally, ubiquitinated. Highest expression is found in brain. Detected at lower levels in lung and liver.

The protein localises to the cytoplasm. It localises to the cytoplasmic vesicle. The protein resides in the clathrin-coated vesicle. In terms of biological role, plays a role in the formation of clathrin-coated invaginations and endocytosis. This chain is Epsin-2 (EPN2), found in Homo sapiens (Human).